We begin with the raw amino-acid sequence, 286 residues long: uncharacterized protein (286 aa).

4 disordered regions span residues 1 to 38 (MSQK…EDDV), 108 to 146 (HTGE…RRHK), 196 to 227 (RTQK…KTRL), and 241 to 286 (DVDD…PRSS). Residues 18–29 (SSSKQVLSSTSS) show a composition bias toward low complexity. Over residues 243–268 (DDQKKDGSGEEKKEKKSAEKEKKISH) the composition is skewed to basic and acidic residues. Positions 269 to 278 (ENVQSLSPSS) are enriched in polar residues.

This is an uncharacterized protein from Caenorhabditis elegans.